We begin with the raw amino-acid sequence, 1142 residues long: Enamelin (1142 aa).

An N-terminal signal peptide occupies residues 1–38 (MLLSCRHGASSPKLDNLVPSGKMKILLVFLGLLCYSAA). Phosphoserine is present on Ser-53. Disordered regions lie at residues 90-347 (YQMP…FYRN), 374-513 (YRRV…IIPK), 543-587 (TEGI…LSHG), and 603-662 (RENS…FPGQ). Over residues 128-148 (QPQPKTPTPKQPLNEPSPTPT) the composition is skewed to pro residues. A phosphoserine mark is found at Ser-191 and Ser-216. Over residues 223 to 234 (DFEKPKEKDPPK) the composition is skewed to basic and acidic residues. Composition is skewed to polar residues over residues 243-303 (SVNT…SQSP) and 381-395 (TARS…NSAN). 4 N-linked (GlcNAc...) asparagine glycosylation sites follow: Asn-245, Asn-252, Asn-264, and Asn-291. Residues 277-514 (NPRSNPTGQN…QTQTQIIPKG (238 aa)) constitute a propeptide that is removed on maturation. The segment covering 431–442 (PREKQVSQKERT) has biased composition (basic and acidic residues). A compositionally biased stretch (polar residues) spans 453–467 (WRNSQDYGINKSNYK). N-linked (GlcNAc...) asparagine glycosylation occurs at Asn-462. At Pro-547 the chain carries Hydroxyproline. Over residues 570 to 582 (FKEDPGRQEEHLP) the composition is skewed to basic and acidic residues. A propeptide spanning residues 666 to 669 (DMEE) is cleaved from the precursor. The segment covering 787–816 (NLYKTPTSSPHQKENQPYSNNSPAGLQKNP) has biased composition (polar residues). Disordered regions lie at residues 787 to 820 (NLYK…TWHE), 921 to 965 (TSIV…SQLS), and 1020 to 1049 (VFGT…QQRQ). N-linked (GlcNAc...) asparagine glycosylation is present at Asn-929. Polar residues predominate over residues 952–965 (LRRSTPCSVKSQLS). N-linked (GlcNAc...) asparagine glycosylation is present at Asn-1040.

In terms of processing, proteolytically cleaved into several smaller polypeptides. Cleavage of N-terminal region of enamelin occurs soon after secretion. Post-translationally, phosphorylated by FAM20C in vitro. As to expression, expressed by secretory-phase ameloblasts. Intact enamelin and large-molecular-weight enamelins are limited to the most superficial layer of the developing enamel matrix, while low-molecular-weight enamelins are observed in deeper enamelin. Preferential localization among the crystallites in rod and interrod enamel.

The protein localises to the secreted. It is found in the extracellular space. Its subcellular location is the extracellular matrix. In terms of biological role, involved in the mineralization and structural organization of enamel. Involved in the extension of enamel during the secretory stage of dental enamel formation. This chain is Enamelin (ENAM), found in Sus scrofa (Pig).